Consider the following 404-residue polypeptide: Metacaspase-1 (404 aa).

The interval 1–97 (MHHHHQQPSY…NPQAFGHGAP (97 aa)) is disordered. Active-site residues include His-195 and Cys-251.

Belongs to the peptidase C14B family.

Its function is as follows. Involved in cell death (apoptosis). In Emericella nidulans (strain FGSC A4 / ATCC 38163 / CBS 112.46 / NRRL 194 / M139) (Aspergillus nidulans), this protein is Metacaspase-1 (casA).